Here is a 1522-residue protein sequence, read N- to C-terminus: Myosin-15 (1522 aa).

Residues 12 to 61 (RKGDKVWVEDKDLAWIAADVLDSFDNKLHVETSTGKKVFVSPEKLFRRDP) enclose the Myosin N-terminal SH3-like domain. The Myosin motor domain occupies 67 to 737 (NGVDDMTKLT…QIGILDSRRA (671 aa)). ATP is bound by residues 161–168 (GESGAGKT) and 214–222 (NDNSSRFGK). Actin-binding regions lie at residues 499 to 533 (LIEK…FQNF), 535 to 558 (FHPR…AGKV), 593 to 618 (FPSA…KQQL), and 618 to 640 (LQAL…KPNS). 5 consecutive IQ domains span residues 763-792 (ARAS…AAAA), 788-817 (NAAA…AAIV), 811-840 (LVSA…HRAA), 836-865 (EHRA…SIIA), and 859-888 (RQSS…VANE). Residues 889–1059 (AGALRLAKTK…NQVLMQKTLI (171 aa)) are a coiled coil. Residues 1164–1456 (NIIIEGINEA…VSQMRVLVDK (293 aa)) enclose the Dilute domain.

It belongs to the TRAFAC class myosin-kinesin ATPase superfamily. Myosin family. Plant myosin class XI subfamily. Homodimer. Interacts with MYOB1 and MYOB7. Interacts with WIT1 and WIT2. Core component of the LINC complex which is composed of inner nuclear membrane SUN domain-containing proteins coupled to outer nuclear membrane WIP and WIT proteins. The LINC complex also involves nucleoskeletal proteins CRWN/LINC and possibly KAKU4 and the cytoskeletal myosin KAKU1.

The protein resides in the cytoplasm. Its subcellular location is the nucleus membrane. Myosin heavy chain that is required for the cell cycle-regulated transport of various organelles and proteins for their segregation. Functions by binding with its tail domain to receptor proteins on organelles and exerting force with its N-terminal motor domain against actin filaments, thereby transporting its cargo along polarized actin cables. Involved in trafficking of Golgi stacks and mitochondria. Plays a role in nuclear shape determination. Drives nuclear movement along actin filaments. As component of the SUN-WIP-WIT2-KAKU1 complex, mediates the transfer of cytoplasmic forces to the nuclear envelope (NE), leading to nuclear shape changes. The protein is Myosin-15 (XI-I) of Arabidopsis thaliana (Mouse-ear cress).